The sequence spans 345 residues: Serpentine receptor class beta-13 (345 aa).

Topologically, residues 1–22 are extracellular; the sequence is MAGINQTKCDLGFQITFNTVYR. Residue Asn5 is glycosylated (N-linked (GlcNAc...) asparagine). A helical transmembrane segment spans residues 23-43; it reads FSQFYTFSVSSFAVPGLIYFM. Residues 44-58 lie on the Cytoplasmic side of the membrane; sequence FKRLFQLYFHGNLKT. A helical membrane pass occupies residues 59–79; it reads LLIAYFISILLYAVMLCFAFG. Residues 80–103 lie on the Extracellular side of the membrane; sequence YQFFVPFFIKSNCDLIINKTLFKY. Asn97 carries N-linked (GlcNAc...) asparagine glycosylation. The chain crosses the membrane as a helical span at residues 104–124; it reads IHTSVIFLLTTPMMFPLGFSI. Residues 125–142 are Cytoplasmic-facing; that stretch reads ERFTAMAMASRYENIRTL. Residues 143–163 traverse the membrane as a helical segment; it reads IGPVLVIFLIIPNCIIFYFLF. The Extracellular portion of the chain corresponds to 164-189; sequence QHETYDDTFISFLMLPNTTAVNFNTY. Asn180 carries N-linked (GlcNAc...) asparagine glycosylation. The helical transmembrane segment at 190–210 threads the bilayer; the sequence is LWFLLYLNIGNLALNVLLLLV. The Cytoplasmic segment spans residues 211 to 241; it reads HRKFKRRLLLHKTSLSTRYAIEEISQSSKFT. Residues 242–262 form a helical membrane-spanning segment; the sequence is LIITFTHLLFFGCNTICSILV. Residues 263–280 are Extracellular-facing; sequence RVLGEPFFGSFINHSVAR. The N-linked (GlcNAc...) asparagine glycan is linked to Asn275. The chain crosses the membrane as a helical span at residues 281–301; sequence GVNCAVPTYNLVIVVVGFVSL. At 302-345 the chain is on the cytoplasmic side; sequence SKLNSRRQQEVQTTVQLKTTGKEGARNYDNITANQWATITQIGF.

It belongs to the nematode receptor-like protein srb family. Expressed in the head sensory neurons ASI, ASK and AWB. Not expressed in male somatic gonads or sperm.

Its subcellular location is the cell membrane. The protein localises to the perikaryon. It is found in the cell projection. The protein resides in the dendrite. G-protein coupled receptor that antagonizes the negative effects of the gcy-35 oxygen sensor on spermatogenesis. This leads to the maintenance of mitochondrial function in developing spermatocytes and/or spermatids prior to testis maturation during the early larval stages. Regulates the navigational capacity of sperm during hyperoxic conditions ensuring the proper targeting of sperm derived from males to the fertilization site in the uterus of hermaphrodites. May act in the same signaling pathway as the neuropeptide flp-21. The polypeptide is Serpentine receptor class beta-13 (Caenorhabditis elegans).